Reading from the N-terminus, the 221-residue chain is Leucyl/phenylalanyl-tRNA--protein transferase (221 aa).

This sequence belongs to the L/F-transferase family.

The protein resides in the cytoplasm. The enzyme catalyses N-terminal L-lysyl-[protein] + L-leucyl-tRNA(Leu) = N-terminal L-leucyl-L-lysyl-[protein] + tRNA(Leu) + H(+). It carries out the reaction N-terminal L-arginyl-[protein] + L-leucyl-tRNA(Leu) = N-terminal L-leucyl-L-arginyl-[protein] + tRNA(Leu) + H(+). The catalysed reaction is L-phenylalanyl-tRNA(Phe) + an N-terminal L-alpha-aminoacyl-[protein] = an N-terminal L-phenylalanyl-L-alpha-aminoacyl-[protein] + tRNA(Phe). Functions in the N-end rule pathway of protein degradation where it conjugates Leu, Phe and, less efficiently, Met from aminoacyl-tRNAs to the N-termini of proteins containing an N-terminal arginine or lysine. This chain is Leucyl/phenylalanyl-tRNA--protein transferase, found in Phenylobacterium zucineum (strain HLK1).